Reading from the N-terminus, the 399-residue chain is Elongation factor Tu (399 aa).

A tr-type G domain is found at 10-204; sequence KPHVNIGTIG…AVDEAIPEPE (195 aa). A G1 region spans residues 19 to 26; it reads GHVDHGKT. Position 19–26 (19–26) interacts with GTP; sequence GHVDHGKT. Mg(2+) is bound at residue Thr-26. The interval 60-64 is G2; the sequence is GITIN. The G3 stretch occupies residues 81–84; it reads DCPG. GTP-binding positions include 81–85 and 136–139; these read DCPGH and NKCD. The segment at 136-139 is G4; that stretch reads NKCD. The tract at residues 174-176 is G5; sequence SGL.

This sequence belongs to the TRAFAC class translation factor GTPase superfamily. Classic translation factor GTPase family. EF-Tu/EF-1A subfamily. In terms of assembly, monomer.

It localises to the cytoplasm. The enzyme catalyses GTP + H2O = GDP + phosphate + H(+). In terms of biological role, GTP hydrolase that promotes the GTP-dependent binding of aminoacyl-tRNA to the A-site of ribosomes during protein biosynthesis. In Parasynechococcus marenigrum (strain WH8102), this protein is Elongation factor Tu.